Reading from the N-terminus, the 175-residue chain is Pre-mRNA-splicing factor SNT309 (175 aa).

As to quaternary structure, belongs to the NTC complex (or PRP19-associated complex), composed of at least CEF1, CLF1, ISY1, NTC20, SNT309, SYF1, SYF2, and PRP19. The NTC complex associates with the spliceosome after the release of the U1 and U4 snRNAs and forms the CWC spliceosome subcomplex (or CEF1-associated complex) reminiscent of a late-stage spliceosome composed also of the U2, U5 and U6 snRNAs and at least BUD13, BUD31, BRR2, CDC40, CUS1, CWC2, CWC15, CWC21, CWC22, CWC23, CWC24, CWC25, CWC27, ECM2, HSH155, IST3, LEA1, MSL1, PRP8, PRP9, PRP11, PRP21, PRP22, PRP45, PRP46, SLU7, SMB1, SMD1, SMD2, SMD3, SMX2, SMX3, SNU114, SPP2, RSE1 and YJU2. Interacts with PRP19.

Its subcellular location is the nucleus. In terms of biological role, involved in pre-mRNA splicing by stabilizing the NTC (or PRP19-associated complex). As a component of the NTC complex, associates to the spliceosome to mediate conformational rearrangement or to stabilize the structure of the spliceosome after U4 snRNA dissociation, which leads to spliceosome maturation. The protein is Pre-mRNA-splicing factor SNT309 (SNT309) of Saccharomyces cerevisiae (strain ATCC 204508 / S288c) (Baker's yeast).